Here is a 575-residue protein sequence, read N- to C-terminus: Adenine deaminase 1 (575 aa).

This sequence belongs to the metallo-dependent hydrolases superfamily. Adenine deaminase family. Mn(2+) is required as a cofactor.

It catalyses the reaction adenine + H2O + H(+) = hypoxanthine + NH4(+). The sequence is that of Adenine deaminase 1 from Agrobacterium fabrum (strain C58 / ATCC 33970) (Agrobacterium tumefaciens (strain C58)).